Consider the following 302-residue polypeptide: uncharacterized protein (302 aa).

The next 10 membrane-spanning stretches (helical) occupy residues 13–32 (GILL…IYFK), 42–64 (ILSH…GRRW), 77–96 (FWLL…IFIW), 106–125 (ASLG…MLFL), 132–150 (LQWF…QLVV), 154–171 (VPIV…YGLL), 183–202 (LFLE…IWLA), 217–239 (NLLL…GAAA), 246–265 (LGFF…VLVY), and 275–297 (ITFA…AGHA). An EamA domain is found at 22–149 (TMWGIAPIYF…AAIGVGIQLV (128 aa)).

It belongs to the EamA transporter family.

It localises to the cell membrane. This is an uncharacterized protein from Vibrio cholerae serotype O1 (strain ATCC 39315 / El Tor Inaba N16961).